The primary structure comprises 588 residues: MFS siderochrome iron transporter 1 (588 aa).

The next 13 membrane-spanning stretches (helical) occupy residues 60-80, 104-124, 133-153, 161-181, 191-211, 225-245, 278-298, 307-327, 348-368, 385-405, 413-433, 440-460, and 473-495; these read QVWS…ITFV, LTAS…LPLA, PQGF…MAAC, AAQV…SIFI, ALMF…GGPL, YGAF…VFAW, IIGI…FSLY, SSLV…FALY, LGAC…DSYF, YIVN…GILV, WLAL…MITF, IGYI…CVIT, and YVAV…GQTV. Asn-519 carries N-linked (GlcNAc...) asparagine glycosylation. Residues 552-572 traverse the membrane as a helical segment; it reads KYMLIGGTAILAVGLGATMMW.

The protein belongs to the major facilitator superfamily.

It localises to the membrane. In terms of biological role, major facilitator transporter involved in siderophore transport. The polypeptide is MFS siderochrome iron transporter 1 (Ajellomyces capsulatus (Darling's disease fungus)).